A 369-amino-acid chain; its full sequence is Glutamate 5-kinase (369 aa).

K9 contributes to the ATP binding site. Substrate is bound by residues S49, D136, and N148. ATP-binding positions include 168 to 169 (TD) and 210 to 216 (TGGMLTK). The 81-residue stretch at 275–355 (QGSIWVDKGA…KGVLIYRDDW (81 aa)) folds into the PUA domain.

It belongs to the glutamate 5-kinase family.

The protein resides in the cytoplasm. The enzyme catalyses L-glutamate + ATP = L-glutamyl 5-phosphate + ADP. It participates in amino-acid biosynthesis; L-proline biosynthesis; L-glutamate 5-semialdehyde from L-glutamate: step 1/2. Functionally, catalyzes the transfer of a phosphate group to glutamate to form L-glutamate 5-phosphate. This chain is Glutamate 5-kinase, found in Streptococcus pneumoniae serotype 4 (strain ATCC BAA-334 / TIGR4).